A 1204-amino-acid chain; its full sequence is Probable cation-transporting ATPase 13A4 (1204 aa).

Residues 1–32 lie on the Cytoplasmic side of the membrane; sequence MGENPAKSHYAQLNLGEENEMEIFGYKTQCCR. The chain crosses the membrane as a helical span at residues 33 to 53; the sequence is KALCIAGYILSCGALLLLFYW. Residues 54-219 lie on the Extracellular side of the membrane; it reads KPEWDVWANC…FSVCLWFAED (166 aa). A helical transmembrane segment spans residues 220–242; that stretch reads YMEYAAAIIIMSPLSISLTVYDL. The Cytoplasmic portion of the chain corresponds to 243–397; sequence RQQSVKLQRL…NFRLYRDALR (155 aa). Residues 398 to 418 form a helical membrane-spanning segment; sequence FLMCLIAFAAIGMIYTVCVFA. The Extracellular portion of the chain corresponds to 419–433; it reads LNGEEAGEVVKKALD. The chain crosses the membrane as a helical span at residues 434–454; the sequence is VITIAVPPALPAALTTGIIYT. The Cytoplasmic segment spans residues 455-897; sequence QRRLKKKGIF…REGRAALVTS (443 aa). The 4-aspartylphosphate intermediate role is filled by Asp-483. Mg(2+) contacts are provided by Asp-845 and Asp-849. The helical transmembrane segment at 898 to 918 threads the bilayer; sequence FCMFKYMALYSTIQYLGVLLL. At 919 to 929 the chain is on the extracellular side; it reads YWQLNSFGNYQ. The helical transmembrane segment at 930–950 threads the bilayer; sequence FLFQDLAITTVIGMTMSFTEA. The Cytoplasmic portion of the chain corresponds to 951–967; it reads YPKLVPYRPPSQLVSPP. Residues 968–988 traverse the membrane as a helical segment; the sequence is LLLSVILNILFSLGMQILGFL. Residues 989–1043 are Extracellular-facing; the sequence is MVQKQPWYSKTDIHSACLSVNNHVENSSSASSLGLHGVGGGDPTEVDNGYKSYEN. The chain crosses the membrane as a helical span at residues 1044–1064; that stretch reads TTVWLLSTINCLIIALVFSKG. At 1065-1075 the chain is on the cytoplasmic side; the sequence is KPFRQPIYTNY. The helical transmembrane segment at 1076 to 1096 threads the bilayer; the sequence is VFIMVLVGQLGVCLFLVFADI. Over 1097–1113 the chain is Extracellular; it reads DDLYSKMDLVCTPTTWR. Residues 1114-1134 traverse the membrane as a helical segment; that stretch reads ISMVMMLAVTLAVSFLVEEAI. Topologically, residues 1135–1204 are cytoplasmic; sequence IENRALWLWL…PTFDSNEDAL (70 aa).

The protein belongs to the cation transport ATPase (P-type) (TC 3.A.3) family. Type V subfamily.

It localises to the membrane. The enzyme catalyses ATP + H2O = ADP + phosphate + H(+). In Gallus gallus (Chicken), this protein is Probable cation-transporting ATPase 13A4 (ATP13A4).